Here is a 117-residue protein sequence, read N- to C-terminus: Large ribosomal subunit protein bL20 (117 aa).

It belongs to the bacterial ribosomal protein bL20 family.

Binds directly to 23S ribosomal RNA and is necessary for the in vitro assembly process of the 50S ribosomal subunit. It is not involved in the protein synthesizing functions of that subunit. The polypeptide is Large ribosomal subunit protein bL20 (Vibrio cholerae serotype O1 (strain ATCC 39541 / Classical Ogawa 395 / O395)).